The following is an 817-amino-acid chain: Lon protease (817 aa).

Residues 44-239 (LPILPLRNTV…ETLRYMNVEL (196 aa)) enclose the Lon N-terminal domain. An ATP-binding site is contributed by 390–397 (GPPGVGKT). The Lon proteolytic domain maps to 626–807 (NDVAGVVTGL…SEVLAIALTD (182 aa)). Catalysis depends on residues S713 and K756.

This sequence belongs to the peptidase S16 family. As to quaternary structure, homohexamer. Organized in a ring with a central cavity.

It is found in the cytoplasm. The enzyme catalyses Hydrolysis of proteins in presence of ATP.. Functionally, ATP-dependent serine protease that mediates the selective degradation of mutant and abnormal proteins as well as certain short-lived regulatory proteins. Required for cellular homeostasis and for survival from DNA damage and developmental changes induced by stress. Degrades polypeptides processively to yield small peptide fragments that are 5 to 10 amino acids long. Binds to DNA in a double-stranded, site-specific manner. The protein is Lon protease of Flavobacterium johnsoniae (strain ATCC 17061 / DSM 2064 / JCM 8514 / BCRC 14874 / CCUG 350202 / NBRC 14942 / NCIMB 11054 / UW101) (Cytophaga johnsonae).